The primary structure comprises 448 residues: Adenylosuccinate synthetase (448 aa).

Residues 22–28 (GDEGKGK) and 50–52 (GHT) each bind GTP. The Proton acceptor role is filled by Asp23. Mg(2+)-binding residues include Asp23 and Gly50. IMP-binding positions include 23 to 26 (DEGK), 48 to 51 (NAGH), Thr139, Arg153, Gln234, Thr249, and Arg321. His51 (proton donor) is an active-site residue. 317–323 (SVTGRPR) contributes to the substrate binding site. GTP-binding positions include Arg323, 349-351 (KLD), and 431-433 (STG).

This sequence belongs to the adenylosuccinate synthetase family. Homodimer. It depends on Mg(2+) as a cofactor.

The protein resides in the cytoplasm. It carries out the reaction IMP + L-aspartate + GTP = N(6)-(1,2-dicarboxyethyl)-AMP + GDP + phosphate + 2 H(+). Its pathway is purine metabolism; AMP biosynthesis via de novo pathway; AMP from IMP: step 1/2. Functionally, plays an important role in the de novo pathway of purine nucleotide biosynthesis. Catalyzes the first committed step in the biosynthesis of AMP from IMP. This Burkholderia mallei (strain NCTC 10247) protein is Adenylosuccinate synthetase.